A 532-amino-acid polypeptide reads, in one-letter code: Intercellular adhesion molecule 1 (532 aa).

Residues 1–27 (MAPSSPRPALPALLVLLGALFPGPGNA) form the signal peptide. Residues 28-480 (QTSVSPPKVI…TVNVLSPRYE (453 aa)) are Extracellular-facing. 2 Ig-like C2-type domains span residues 41–103 (GGSV…QSTA) and 128–193 (GKDL…LDLR). 3 disulfides stabilise this stretch: cysteine 48-cysteine 92, cysteine 52-cysteine 96, and cysteine 135-cysteine 186. N-linked (GlcNAc...) asparagine glycosylation occurs at asparagine 145. Residues 152-154 (RGE) carry the Cell attachment site; atypical motif. 4 N-linked (GlcNAc...) asparagine glycosylation sites follow: asparagine 183, asparagine 202, asparagine 267, and asparagine 296. 2 consecutive Ig-like C2-type domains span residues 230–297 (DTQG…LGNQ) and 325–378 (GTEV…LEVA). A disulfide bridge connects residues cysteine 237 and cysteine 290. Cysteine 332 and cysteine 371 form a disulfide bridge. N-linked (GlcNAc...) asparagine glycans are attached at residues asparagine 385 and asparagine 406. Cystine bridges form between cysteine 403–cysteine 419, cysteine 419–cysteine 457, and cysteine 431–cysteine 457. The Ig-like C2-type 5 domain occupies 412-464 (NSQQTPMCQASGNPLPELKCLKDGTFPLPVGESVTVTRDLEGTYLCRARSTQG). A helical transmembrane segment spans residues 481–503 (IVIITVVAAAVIMGTAGLSTYLY). Topologically, residues 504-532 (NRQRKIRKYRLQQAQKGTPMKPNTQATPP) are cytoplasmic. Residues threonine 521 and threonine 530 each carry the phosphothreonine modification.

It belongs to the immunoglobulin superfamily. ICAM family. Homodimer. Interacts with MUC1 and promotes cell aggregation in epithelial cells. Interacts with ARHGEF26/SGEF. Interacts (on T cell side) with CD81, CD247 and CD9 at immunological synapses between antigen-presenting cells and T cells. Post-translationally, monoubiquitinated, which is promoted by MARCH9 and leads to endocytosis.

It localises to the membrane. Its function is as follows. ICAM proteins are ligands for the leukocyte adhesion protein LFA-1 (integrin alpha-L/beta-2). During leukocyte trans-endothelial migration, ICAM1 engagement promotes the assembly of endothelial apical cups through ARHGEF26/SGEF and RHOG activation. In Pan troglodytes (Chimpanzee), this protein is Intercellular adhesion molecule 1 (ICAM1).